Here is a 238-residue protein sequence, read N- to C-terminus: Probable transcriptional regulatory protein IL0164 (238 aa).

The protein belongs to the TACO1 family.

The protein resides in the cytoplasm. In Idiomarina loihiensis (strain ATCC BAA-735 / DSM 15497 / L2-TR), this protein is Probable transcriptional regulatory protein IL0164.